Here is a 345-residue protein sequence, read N- to C-terminus: KRR1 small subunit processome component homolog (345 aa).

In terms of domain architecture, KH spans 125–193 (DIIKIGNLVH…VRDIVLETMN (69 aa)). Residues 232-245 (NISKRKQPKVKKQK) show a composition bias toward basic residues. 2 disordered regions span residues 232–260 (NISK…ESKV) and 273–345 (QEQK…ARSS). The stretch at 270 to 298 (FLNQEQKQAKRNQERTEKQKEAAKRQDER) forms a coiled coil. Basic and acidic residues-rich tracts occupy residues 276-302 (KQAK…RNKD) and 315-330 (RKKE…DVKA). Residues 331–345 (LKAKLIKANKKARSS) show a composition bias toward basic residues.

This sequence belongs to the KRR1 family. Monomer. Component of the ribosomal small subunit (SSU) processome.

The protein resides in the nucleus. Its subcellular location is the nucleolus. Its function is as follows. Required for 40S ribosome biogenesis. Involved in nucleolar processing of pre-18S ribosomal RNA and ribosome assembly. Binds to RNA. Required for female germline development, cell viability during eye development and for survival of dividing cells and epithelial cells during early wing disk development. This is KRR1 small subunit processome component homolog (dbe) from Drosophila melanogaster (Fruit fly).